A 429-amino-acid polypeptide reads, in one-letter code: Citrate synthase (429 aa).

Active-site residues include His306 and Asp364.

The protein belongs to the citrate synthase family.

The catalysed reaction is oxaloacetate + acetyl-CoA + H2O = citrate + CoA + H(+). It participates in carbohydrate metabolism; tricarboxylic acid cycle; isocitrate from oxaloacetate: step 1/2. This chain is Citrate synthase (gltA), found in Rhizobium meliloti (strain 1021) (Ensifer meliloti).